The following is a 121-amino-acid chain: NADH-ubiquinone oxidoreductase chain 3 (121 aa).

The next 3 membrane-spanning stretches (helical) occupy residues 11 to 31, 63 to 83, and 90 to 110; these read ILTF…LSYF, FYLV…LFPW, and LSIF…LGFI.

Belongs to the complex I subunit 3 family.

The protein resides in the mitochondrion membrane. It catalyses the reaction a ubiquinone + NADH + 5 H(+)(in) = a ubiquinol + NAD(+) + 4 H(+)(out). In terms of biological role, core subunit of the mitochondrial membrane respiratory chain NADH dehydrogenase (Complex I) that is believed to belong to the minimal assembly required for catalysis. Complex I functions in the transfer of electrons from NADH to the respiratory chain. The immediate electron acceptor for the enzyme is believed to be ubiquinone. This chain is NADH-ubiquinone oxidoreductase chain 3 (NAD3), found in Porphyra purpurea (Red seaweed).